A 264-amino-acid polypeptide reads, in one-letter code: Thymidylate synthase (264 aa).

R21 provides a ligand contact to dUMP. Residue H51 participates in (6R)-5,10-methylene-5,6,7,8-tetrahydrofolate binding. Residue 126 to 127 coordinates dUMP; it reads RR. C146 functions as the Nucleophile in the catalytic mechanism. DUMP contacts are provided by residues 166–169, N177, and 207–209; these read RSAD and HLY. D169 provides a ligand contact to (6R)-5,10-methylene-5,6,7,8-tetrahydrofolate. A263 is a (6R)-5,10-methylene-5,6,7,8-tetrahydrofolate binding site.

Belongs to the thymidylate synthase family. Bacterial-type ThyA subfamily. As to quaternary structure, homodimer.

Its subcellular location is the cytoplasm. The enzyme catalyses dUMP + (6R)-5,10-methylene-5,6,7,8-tetrahydrofolate = 7,8-dihydrofolate + dTMP. The protein operates within pyrimidine metabolism; dTTP biosynthesis. In terms of biological role, catalyzes the reductive methylation of 2'-deoxyuridine-5'-monophosphate (dUMP) to 2'-deoxythymidine-5'-monophosphate (dTMP) while utilizing 5,10-methylenetetrahydrofolate (mTHF) as the methyl donor and reductant in the reaction, yielding dihydrofolate (DHF) as a by-product. This enzymatic reaction provides an intracellular de novo source of dTMP, an essential precursor for DNA biosynthesis. In Methylorubrum extorquens (strain CM4 / NCIMB 13688) (Methylobacterium extorquens), this protein is Thymidylate synthase.